Here is a 285-residue protein sequence, read N- to C-terminus: DNA repair protein RecO (285 aa).

Belongs to the RecO family.

In terms of biological role, involved in DNA repair and RecF pathway recombination. The chain is DNA repair protein RecO from Synechococcus sp. (strain JA-2-3B'a(2-13)) (Cyanobacteria bacterium Yellowstone B-Prime).